A 256-amino-acid chain; its full sequence is Small ribosomal subunit protein uS3 (256 aa).

A KH type-2 domain is found at 39 to 111; sequence IREFLNENFS…EVILNIIEVR (73 aa). Positions 219–256 are disordered; that stretch reads DTRKPFEAGNQKRGQKRRPRNDQPGQRPQQRNRNSKED. The segment covering 240 to 250 has biased composition (low complexity); the sequence is DQPGQRPQQRN.

This sequence belongs to the universal ribosomal protein uS3 family. As to quaternary structure, part of the 30S ribosomal subunit. Forms a tight complex with proteins S10 and S14.

Its function is as follows. Binds the lower part of the 30S subunit head. Binds mRNA in the 70S ribosome, positioning it for translation. The protein is Small ribosomal subunit protein uS3 of Acholeplasma laidlawii (strain PG-8A).